The chain runs to 339 residues: Replication factor C subunit 4 (339 aa).

ATP is bound at residue 49–56; that stretch reads GPPGTGKT.

This sequence belongs to the activator 1 small subunits family. In terms of assembly, heterotetramer of subunits RFC2, RFC3, RFC4 and RFC5 that can form a complex with RFC1.

It is found in the nucleus. May be involved in DNA replication and thus regulate cell proliferation. This is Replication factor C subunit 4 (RFC4) from Arabidopsis thaliana (Mouse-ear cress).